Here is a 530-residue protein sequence, read N- to C-terminus: MSGASSSEQNNNSYETKPPNLRMSEKKCSWASYMTNSPTLIVMIGLPARGKTYVSKKLTRYLNWIGVPTKVFNLGVYRREAVKSYKSYDFFRHDNEEAMKIRKQCALVALEDVKAYLTEENGQIAVFDATNTTRERRDMILNFAEQNSFKVFFVESVCDDPDVIAANILEVKVSSPDYPERNRENVMEDFLKRIECYKVTYRPLDPDNYDKDLSFIKVINVGQRFLVNRVQDYIQSKIVYYLMNIHVQPRTIYLCRHGESEFSLLGKIGGDSGLSVRGKQFAQALRKFLEEQEITDLKVWTSQLKRTIQTAESLGVPYEQWKILNEIDAGVCEEMTYAEIEKRYPEEFALRDQEKYLYRYPGGESYQDLVQRLEPVIMELERQGNVLVISHQAVMRCLLAYFLDKGADELPYLRCPLHTIFKLTPVAYGCKVETIKLNVEAVNTHRDKPTNNFPKNQTPVRMRRNSFTPLSSSNTIRRPRNYSVGSRPLKPLSPLRAQDMQEGPTSRRPKSHSGWCTVCFPPALASCPCH.

The segment covering 1-15 (MSGASSSEQNNNSYE) has biased composition (polar residues). The segment at 1-21 (MSGASSSEQNNNSYETKPPNL) is disordered. Residue Ser-2 is modified to N-acetylserine. Positions 2-248 (SGASSSEQNN…VYYLMNIHVQ (247 aa)) are 6-phosphofructo-2-kinase. Position 29 is a phosphoserine; by PKA (Ser-29). 45-53 (GLPARGKTY) lines the ATP pocket. Beta-D-fructose 6-phosphate is bound by residues Arg-78 and Arg-102. The active site involves Asp-128. The beta-D-fructose 6-phosphate site is built by Thr-130 and Arg-136. The active site involves Cys-158. ATP is bound at residue 167–172 (NILEVK). Lys-172, Arg-193, and Tyr-197 together coordinate beta-D-fructose 6-phosphate. Residues 249-530 (PRTIYLCRHG…PPALASCPCH (282 aa)) are fructose-2,6-bisphosphatase. Arg-256 serves as a coordination point for beta-D-fructose 2,6-bisphosphate. His-257 (tele-phosphohistidine intermediate) is an active-site residue. Gly-269 is a binding site for beta-D-fructose 2,6-bisphosphate. Catalysis depends on Glu-326, which acts as the Proton donor/acceptor. Residues Tyr-337, Arg-351, Lys-355, Tyr-366, Gln-392, and Arg-396 each coordinate beta-D-fructose 2,6-bisphosphate. Residue 348 to 351 (FALR) coordinates ATP. ATP contacts are provided by residues 392-396 (QAVMR) and Tyr-428. A disordered region spans residues 446-512 (RDKPTNNFPK…GPTSRRPKSH (67 aa)). A compositionally biased stretch (polar residues) spans 450 to 476 (TNNFPKNQTPVRMRRNSFTPLSSSNTI). Phosphoserine; by AMPK and PKA is present on Ser-466. Phosphothreonine is present on Thr-468. Position 475 is a phosphothreonine; by PKC (Thr-475). A phosphoserine mark is found at Ser-483 and Ser-493.

It in the C-terminal section; belongs to the phosphoglycerate mutase family. As to quaternary structure, homodimer. Forms a heterodimer with PFKFB3. In terms of processing, phosphorylation by AMPK stimulates activity.

It carries out the reaction beta-D-fructose 2,6-bisphosphate + H2O = beta-D-fructose 6-phosphate + phosphate. The catalysed reaction is beta-D-fructose 6-phosphate + ATP = beta-D-fructose 2,6-bisphosphate + ADP + H(+). Its activity is regulated as follows. Phosphorylation results in the activation of the kinase activity. Its function is as follows. Synthesis and degradation of fructose 2,6-bisphosphate. The protein is 6-phosphofructo-2-kinase/fructose-2,6-bisphosphatase 2 (PFKFB2) of Pongo abelii (Sumatran orangutan).